The chain runs to 510 residues: Histone deacetylase 3 (510 aa).

The segment at Arg-24 to Gly-338 is histone deacetylase. The active-site Proton donor/acceptor is the His-158. The Zn(2+) site is built by Asp-193, His-195, and Asp-281. Residues Pro-394 to Lys-510 are disordered. Basic and acidic residues-rich tracts occupy residues Asp-418–Pro-434 and Val-448–Pro-472. Residues Ala-485–Asn-503 are compositionally biased toward low complexity.

This sequence belongs to the histone deacetylase family. HD Type 1 subfamily. Requires Zn(2+) as cofactor. As to expression, expressed in roots.

It is found in the nucleus. It catalyses the reaction N(6)-acetyl-L-lysyl-[histone] + H2O = L-lysyl-[histone] + acetate. Its function is as follows. Responsible for the deacetylation of lysine residues on the N-terminal part of the core histones (H2A, H2B, H3 and H4). Histone deacetylation gives a tag for epigenetic repression and plays an important role in transcriptional regulation, cell cycle progression and developmental events. Histone deacetylases act via the formation of large multiprotein complexes. In Oryza sativa subsp. japonica (Rice), this protein is Histone deacetylase 3.